We begin with the raw amino-acid sequence, 276 residues long: Acyl-[acyl-carrier-protein]--UDP-N-acetylglucosamine O-acyltransferase (276 aa).

The protein belongs to the transferase hexapeptide repeat family. LpxA subfamily. In terms of assembly, homotrimer.

The protein resides in the cytoplasm. It carries out the reaction a (3R)-hydroxyacyl-[ACP] + UDP-N-acetyl-alpha-D-glucosamine = a UDP-3-O-[(3R)-3-hydroxyacyl]-N-acetyl-alpha-D-glucosamine + holo-[ACP]. Its pathway is glycolipid biosynthesis; lipid IV(A) biosynthesis; lipid IV(A) from (3R)-3-hydroxytetradecanoyl-[acyl-carrier-protein] and UDP-N-acetyl-alpha-D-glucosamine: step 1/6. Involved in the biosynthesis of lipid A, a phosphorylated glycolipid that anchors the lipopolysaccharide to the outer membrane of the cell. The sequence is that of Acyl-[acyl-carrier-protein]--UDP-N-acetylglucosamine O-acyltransferase from Rippkaea orientalis (strain PCC 8801 / RF-1) (Cyanothece sp. (strain PCC 8801)).